The sequence spans 246 residues: Probable septum site-determining protein MinC (246 aa).

Belongs to the MinC family. As to quaternary structure, interacts with MinD and FtsZ.

Functionally, cell division inhibitor that blocks the formation of polar Z ring septums. Rapidly oscillates between the poles of the cell to destabilize FtsZ filaments that have formed before they mature into polar Z rings. Prevents FtsZ polymerization. This chain is Probable septum site-determining protein MinC, found in Pseudomonas syringae pv. syringae (strain B728a).